The chain runs to 159 residues: Ribosome maturation factor RimP (159 aa).

Belongs to the RimP family.

The protein resides in the cytoplasm. Required for maturation of 30S ribosomal subunits. This chain is Ribosome maturation factor RimP, found in Bordetella avium (strain 197N).